A 528-amino-acid polypeptide reads, in one-letter code: MAKKILYQDNARRALERGMEIMVEAVSVTLGPKGRNVVLEKPYGSPQIVNDGVTIAKEINLEDHIENTGVALIRQAASKTNDVAGDGTTTATVLAYAMVKEGLKNVTAGANPISIKLGMEKATQYLVTQINEFAQPVEDIQSIEQVASISAGNDNLIGSLIADALSKVGKEGVISLEEGKGIITELEITEGMKLEKGFISPYFITNTEKMEVSYENPFILLTDKRITLVQQDLLPILEQITKTKRPLLLIAEDVEKEALATLILNKLRGIVNVVAVRAPGFGELRKQMLEDIAVLTGGTVITQDAGLSLENIQVNLLGQARRIIVNKDSTTIVGDGLEIEQIKARCEQLRKQVNIADTGYEKEKLQDRIAKLSGGIAVIRVGAVTETEMKDKKLRLEDAINATRAAVEEGIVPGGGATLAHLAENLLTWAKINLKEDELIGAMIISRAIVAPLKRIAENAGINGPVIIEKVQQQEFEIGYNAAKNVFGNMYDEGIVDPAKVTRSGLQNATSIASMILTTECIIVDETD.

Residues 29–32 (TLGP), 86–90 (DGTTT), Gly415, 481–483 (NAA), and Asp497 each bind ATP.

This sequence belongs to the chaperonin (HSP60) family. In terms of assembly, forms a cylinder of 14 subunits composed of two heptameric rings stacked back-to-back. Interacts with the co-chaperonin GroES.

The protein localises to the plastid. The protein resides in the chloroplast. The enzyme catalyses ATP + H2O + a folded polypeptide = ADP + phosphate + an unfolded polypeptide.. Functionally, together with its co-chaperonin GroES, plays an essential role in assisting protein folding. The GroEL-GroES system forms a nano-cage that allows encapsulation of the non-native substrate proteins and provides a physical environment optimized to promote and accelerate protein folding. The chain is Chaperonin GroEL, chloroplastic from Trieres chinensis (Marine centric diatom).